A 156-amino-acid chain; its full sequence is Small ribosomal subunit protein uS7c (156 aa).

It belongs to the universal ribosomal protein uS7 family. In terms of assembly, part of the 30S ribosomal subunit.

It localises to the plastid. It is found in the chloroplast. In terms of biological role, one of the primary rRNA binding proteins, it binds directly to 16S rRNA where it nucleates assembly of the head domain of the 30S subunit. In Nephroselmis olivacea (Green alga), this protein is Small ribosomal subunit protein uS7c (rps7).